Consider the following 529-residue polypeptide: MFS glucose transporter mfs1 (529 aa).

12 helical membrane-spanning segments follow: residues 7-27, 52-72, 86-106, 109-129, 138-158, 179-199, 272-292, 301-321, 330-350, 375-395, 415-439, and 446-464; these read VYFL…DISS, SITC…SFIA, ILWI…LLVV, VIAG…QAEI, VISL…FIQY, IPWG…FLFP, LQMW…VYIM, LLTA…AIIY, AILI…GLQG, AVGK…ATTI, AVSL…PLLW, and YMIF…FLTA.

The protein belongs to the major facilitator superfamily. Sugar transporter (TC 2.A.1.1) family.

It localises to the membrane. In terms of biological role, probable MFS glucose transporter; part of the gene cluster 27 that mediates the biosynthesis of asparasone A, a sclerotium-specific anthraquinone pigment important for sclerotial survival. The protein is MFS glucose transporter mfs1 of Aspergillus flavus (strain ATCC 200026 / FGSC A1120 / IAM 13836 / NRRL 3357 / JCM 12722 / SRRC 167).